The sequence spans 39 residues: Cytochrome b559 subunit beta (39 aa).

A helical membrane pass occupies residues Trp-14 to Ser-30. His-18 is a binding site for heme.

The protein belongs to the PsbE/PsbF family. Heterodimer of an alpha subunit and a beta subunit. PSII is composed of 1 copy each of membrane proteins PsbA, PsbB, PsbC, PsbD, PsbE, PsbF, PsbH, PsbI, PsbJ, PsbK, PsbL, PsbM, PsbT, PsbX, PsbY, PsbZ, Psb30/Ycf12, at least 3 peripheral proteins of the oxygen-evolving complex and a large number of cofactors. It forms dimeric complexes. Heme b is required as a cofactor.

It localises to the plastid. Its subcellular location is the chloroplast thylakoid membrane. In terms of biological role, this b-type cytochrome is tightly associated with the reaction center of photosystem II (PSII). PSII is a light-driven water:plastoquinone oxidoreductase that uses light energy to abstract electrons from H(2)O, generating O(2) and a proton gradient subsequently used for ATP formation. It consists of a core antenna complex that captures photons, and an electron transfer chain that converts photonic excitation into a charge separation. The polypeptide is Cytochrome b559 subunit beta (Pinus koraiensis (Korean pine)).